Consider the following 297-residue polypeptide: Ezy-1 protein (297 aa).

Disordered regions lie at residues 1-34, 115-151, and 255-297; these read MAAV…GDGG, FTGK…SSSS, and QPAG…SPNM. A compositionally biased stretch (acidic residues) spans 123–135; sequence AEGDDGEDEEEGE. Residues 136 to 150 are compositionally biased toward low complexity; that stretch reads AQGVGKDAVDSSSSS. A compositionally biased stretch (basic and acidic residues) spans 259–269; the sequence is DGHEPEPKRPE.

The protein is Ezy-1 protein (Ezy-1) of Chlamydomonas reinhardtii (Chlamydomonas smithii).